A 572-amino-acid chain; its full sequence is Oxygen-dependent choline dehydrogenase (572 aa).

Residue 7–36 (DYIIIGAGSAGNVLATRLTEDRDVTVLLLE) coordinates FAD. His-474 acts as the Proton acceptor in catalysis.

The protein belongs to the GMC oxidoreductase family. FAD serves as cofactor.

It carries out the reaction choline + A = betaine aldehyde + AH2. The enzyme catalyses betaine aldehyde + NAD(+) + H2O = glycine betaine + NADH + 2 H(+). Its pathway is amine and polyamine biosynthesis; betaine biosynthesis via choline pathway; betaine aldehyde from choline (cytochrome c reductase route): step 1/1. Functionally, involved in the biosynthesis of the osmoprotectant glycine betaine. Catalyzes the oxidation of choline to betaine aldehyde and betaine aldehyde to glycine betaine at the same rate. This chain is Oxygen-dependent choline dehydrogenase, found in Paraburkholderia phymatum (strain DSM 17167 / CIP 108236 / LMG 21445 / STM815) (Burkholderia phymatum).